A 326-amino-acid polypeptide reads, in one-letter code: MHTGGEPLRIVTDGFPKPDGKTILQKRRFVKEKLDNFRKLLMHEPRGHYDMYGALLVEPDIEDADIAVLFMDNRSYSTMCGHAVIALGRYATDYGYVRPTEPETKVNIECPCGLVKALVEYKNGKSGSVRFQSVPAFVFATDVELNVQGHGKVKVDISYGGAFYAFISADKLGLDLWKTPINQIKDAATMVTNAVKNEVQLEHPDDNDLAFIYGTIVTDGKDEYSDEPTANICVFADAQVDRSPTGSGVTARTALQYHKRHISLNKSRVFVNARIGSKFSAKPVRQTKCGSYDAVIIEVSGHAFYTGKSAFTFEEDDPLKGGFLLK.

Cys-80 (proton acceptor) is an active-site residue. Substrate contacts are provided by residues 81–82 (GH), Asp-241, and 246–247 (GS).

The protein belongs to the proline racemase family. In terms of assembly, homodimer.

The catalysed reaction is trans-3-hydroxy-L-proline = 1-pyrroline-2-carboxylate + H2O. Its function is as follows. Catalyzes the dehydration of trans-3-hydroxy-L-proline to delta-1-pyrroline-2-carboxylate (Pyr2C). The polypeptide is Trans-L-3-hydroxyproline dehydratase (l3hypdh) (Saccoglossus kowalevskii (Acorn worm)).